Here is a 588-residue protein sequence, read N- to C-terminus: Sentrin-specific protease 2 (588 aa).

The Nuclear localization signal motif lies at 28–31; it reads KRRR. Position 32 is a phosphoserine (Ser-32). The Nuclear localization signal motif lies at 47 to 52; sequence PAKRPR. The segment at 72 to 381 is axin-binding; the sequence is GFPFQLTTKP…EKEISNALGH (310 aa). The interval 157 to 184 is disordered; that stretch reads EGYNRRPSGRRHSKSNPESSLPWKPQEQ. Positions 316–331 match the Nuclear export signal motif; that stretch reads LEPDLSEEVSARLRLG. A phosphoserine mark is found at Ser-332 and Ser-343. Residues 394 to 558 are protease; it reads LRITRGDIQT…MFTCKYADYI (165 aa). Residues His-477 and Asp-494 contribute to the active site. Cys-547 acts as the Nucleophile in catalysis.

Belongs to the peptidase C48 family. Binds to SUMO2 and SUMO3. Interacts with the C-terminal domain of NUP153 via its N-terminus. Interacts with MTA1. Binds to AXIN1. Polyubiquitinated; which leads to proteasomal degradation. In terms of tissue distribution, ubiquitous. Highly expressed in brain, lung and testis.

It is found in the nucleus. The protein localises to the nuclear pore complex. Its subcellular location is the nucleus membrane. The protein resides in the cytoplasm. Functionally, protease that catalyzes two essential functions in the SUMO pathway. The first is the hydrolysis of an alpha-linked peptide bond at the C-terminal end of the small ubiquitin-like modifier (SUMO) propeptides, SUMO1, SUMO2 and SUMO3 leading to the mature form of the proteins. The second is the deconjugation of SUMO1, SUMO2 and SUMO3 from targeted proteins, by cleaving an epsilon-linked peptide bond between the C-terminal glycine of the mature SUMO and the lysine epsilon-amino group of the target protein. May down-regulate CTNNB1 levels and thereby modulate the Wnt pathway. Deconjugates SUMO2 from MTA1. Plays a dynamic role in adipogenesis by desumoylating and promoting the stabilization of CEBPB. Acts as a regulator of the cGAS-STING pathway by catalyzing desumoylation of CGAS and STING1 during the late phase of viral infection. In Rattus norvegicus (Rat), this protein is Sentrin-specific protease 2 (Senp2).